The primary structure comprises 149 residues: Nucleoside diphosphate kinase (149 aa).

Lys9, Phe57, Arg85, Thr91, Arg102, and Asn112 together coordinate ATP. The active-site Pros-phosphohistidine intermediate is His115.

The protein belongs to the NDK family. Requires Mg(2+) as cofactor.

Its subcellular location is the cytoplasm. It carries out the reaction a 2'-deoxyribonucleoside 5'-diphosphate + ATP = a 2'-deoxyribonucleoside 5'-triphosphate + ADP. The catalysed reaction is a ribonucleoside 5'-diphosphate + ATP = a ribonucleoside 5'-triphosphate + ADP. Major role in the synthesis of nucleoside triphosphates other than ATP. The ATP gamma phosphate is transferred to the NDP beta phosphate via a ping-pong mechanism, using a phosphorylated active-site intermediate. The polypeptide is Nucleoside diphosphate kinase (Methanosarcina acetivorans (strain ATCC 35395 / DSM 2834 / JCM 12185 / C2A)).